Here is a 250-residue protein sequence, read N- to C-terminus: Glucosamine-6-phosphate deaminase (250 aa).

The active-site Proton acceptor; for enolization step is the Asp-67. Residue Asn-136 is the For ring-opening step of the active site. His-138 acts as the Proton acceptor; for ring-opening step in catalysis. The active-site For ring-opening step is the Glu-143.

Belongs to the glucosamine/galactosamine-6-phosphate isomerase family. NagB subfamily.

The enzyme catalyses alpha-D-glucosamine 6-phosphate + H2O = beta-D-fructose 6-phosphate + NH4(+). It participates in amino-sugar metabolism; N-acetylneuraminate degradation; D-fructose 6-phosphate from N-acetylneuraminate: step 5/5. Functionally, catalyzes the reversible isomerization-deamination of glucosamine 6-phosphate (GlcN6P) to form fructose 6-phosphate (Fru6P) and ammonium ion. The polypeptide is Glucosamine-6-phosphate deaminase (Oceanobacillus iheyensis (strain DSM 14371 / CIP 107618 / JCM 11309 / KCTC 3954 / HTE831)).